Here is a 601-residue protein sequence, read N- to C-terminus: MKLTREFPSNYAMAQWQPSDHKDAQVIGELFAHFGAERFTIQNTRTGVPVVWLSRELLLDVMGFLRKLPSPFVMLFDLSATDERMRSHRHDLPDSDFTVFYHLISIDRNADLMLKVPLKEGDLTLPTVSRHFPNANWYEREVWDLMGINFDGHPHLTRIMMPKSWQGHPLRKDYPARATEFDPFMLDAVKQDQEQDNLLFKPEEWGMARGNENEDYMFLNLGPNHPSAHGAFRLVLQLDGEEIRDCVPDIGYHHRGAEKMGERQSWHSYIPYTDRVEYLGGVMNNLPYVLAVEKLAGIKVPQRVDMIRVMLAELFRIQSHLLFIGTYIQDVGAMTPVFFTFTDRQRIYTIIEAITGARMHPAWFRIGGVAHDLPVGWQRLVQDNLLSWLPKRLMDYEKAAMRNSILRGRTIGVAAYNTEQALAWGTTGGGLRATGLNFDVRKWRPYSGYDQFEFEVPVGANGDAYDRALVRIEEVRQSMRIIEQCMKNMPEGPFKADHPLTTPPPKERTLQDIETLITHFLQVSWGPVMPAAESFQMIEATKGINSYYLTSDGSTMSYRTRIRTPSFAHLQQIPSVIRGQMVSDLIVYLGSIDFVMSDVDR.

The NADH dehydrogenase I subunit C stretch occupies residues 1–191 (MKLTREFPSN…DPFMLDAVKQ (191 aa)). The NADH dehydrogenase I subunit D stretch occupies residues 215–601 (DYMFLNLGPN…IDFVMSDVDR (387 aa)).

The protein in the N-terminal section; belongs to the complex I 30 kDa subunit family. It in the C-terminal section; belongs to the complex I 49 kDa subunit family. As to quaternary structure, NDH-1 is composed of 13 different subunits. Subunits NuoB, CD, E, F, and G constitute the peripheral sector of the complex.

It localises to the cell inner membrane. The catalysed reaction is a quinone + NADH + 5 H(+)(in) = a quinol + NAD(+) + 4 H(+)(out). In terms of biological role, NDH-1 shuttles electrons from NADH, via FMN and iron-sulfur (Fe-S) centers, to quinones in the respiratory chain. The immediate electron acceptor for the enzyme in this species is believed to be ubiquinone. Couples the redox reaction to proton translocation (for every two electrons transferred, four hydrogen ions are translocated across the cytoplasmic membrane), and thus conserves the redox energy in a proton gradient. This is NADH-quinone oxidoreductase subunit C/D from Aeromonas hydrophila subsp. hydrophila (strain ATCC 7966 / DSM 30187 / BCRC 13018 / CCUG 14551 / JCM 1027 / KCTC 2358 / NCIMB 9240 / NCTC 8049).